The chain runs to 571 residues: Potassium-transporting ATPase potassium-binding subunit (571 aa).

The next 11 helical transmembrane spans lie at 3–23 (LIGWFQIALFCAVVLALVKPL), 64–84 (LGYGLAMLVFHALGFVSLYAI), 135–155 (LGLTPQNFLSAATGLALAVAL), 179–199 (LYVLLPLCIGLTLFYVWQGMP), 254–274 (LANLVQMVTIFALGAAMTNVF), 284–304 (GWAILAAMGVLFLAGVAVTYA), 330–350 (FGIVASALFAVVTTAASCGAV), 357–376 (FTALGGLIPMLNMQLGEIIV), 421–441 (MLAILCLPLMMLGLAALATVL), 488–508 (LALGMAVGRFMVIVPALAIAG), and 527–547 (GGLFVGLLVGVILIVGGLTFF).

This sequence belongs to the KdpA family. In terms of assembly, the system is composed of three essential subunits: KdpA, KdpB and KdpC.

Its subcellular location is the cell inner membrane. In terms of biological role, part of the high-affinity ATP-driven potassium transport (or Kdp) system, which catalyzes the hydrolysis of ATP coupled with the electrogenic transport of potassium into the cytoplasm. This subunit binds the periplasmic potassium ions and delivers the ions to the membrane domain of KdpB through an intramembrane tunnel. In Methylorubrum populi (strain ATCC BAA-705 / NCIMB 13946 / BJ001) (Methylobacterium populi), this protein is Potassium-transporting ATPase potassium-binding subunit.